The primary structure comprises 258 residues: Cell division protein FtsQ (258 aa).

Over methionine 1–threonine 29 the chain is Cytoplasmic. Residues alanine 30 to leucine 50 traverse the membrane as a helical segment. Residues proline 51–serine 258 are Periplasmic-facing. The POTRA domain maps to tyrosine 57–arginine 127.

Belongs to the FtsQ/DivIB family. FtsQ subfamily. In terms of assembly, part of a complex composed of FtsB, FtsL and FtsQ.

Its subcellular location is the cell inner membrane. Functionally, essential cell division protein. May link together the upstream cell division proteins, which are predominantly cytoplasmic, with the downstream cell division proteins, which are predominantly periplasmic. May control correct divisome assembly. The protein is Cell division protein FtsQ of Alcanivorax borkumensis (strain ATCC 700651 / DSM 11573 / NCIMB 13689 / SK2).